Here is a 320-residue protein sequence, read N- to C-terminus: Glutathione synthetase (320 aa).

The ATP-grasp domain occupies Lys-130–Glu-315. Trp-156–Gly-212 lines the ATP pocket. Mg(2+)-binding residues include Glu-286 and Asn-288.

It belongs to the prokaryotic GSH synthase family. Mg(2+) is required as a cofactor. Mn(2+) serves as cofactor.

The enzyme catalyses gamma-L-glutamyl-L-cysteine + glycine + ATP = glutathione + ADP + phosphate + H(+). It participates in sulfur metabolism; glutathione biosynthesis; glutathione from L-cysteine and L-glutamate: step 2/2. This Buchnera aphidicola subsp. Acyrthosiphon pisum (strain APS) (Acyrthosiphon pisum symbiotic bacterium) protein is Glutathione synthetase.